The sequence spans 203 residues: Endoplasmic reticulum transmembrane protein 3 (203 aa).

Over 1 to 6 the chain is Lumenal; that stretch reads MSLYYT. Residues 7–27 form a helical membrane-spanning segment; sequence LVFAILVVEIFMFSILALPIP. Residues 28 to 45 lie on the Cytoplasmic side of the membrane; that stretch reads SRYRRPLTLLLLKPFKSS. Residues 46 to 66 form a helical membrane-spanning segment; that stretch reads TVQVAIKCVLGFILLLFIDCI. At 67-110 the chain is on the lumenal side; the sequence is NRVYSIDKELQLSSASQNNGAIIAQDRIEVLSRKFFAQRNMYLT. The chain crosses the membrane as a helical span at residues 111 to 131; sequence GITLFLTFVVVRTFGLVIELL. At 132–203 the chain is on the cytoplasmic side; sequence TMKDIYRASP…KSESLQEEIN (72 aa). Residues 142–171 are disordered; the sequence is PVASSDVKKNDSVTAEAAAQSGASKDDHGD.

Belongs to the BCAP29/BCAP31 family.

The protein localises to the endoplasmic reticulum membrane. Its function is as follows. May play a role in anterograde transport of membrane proteins from the endoplasmic reticulum to the Golgi. May be involved in invertase secretion. In Saccharomyces cerevisiae (strain ATCC 204508 / S288c) (Baker's yeast), this protein is Endoplasmic reticulum transmembrane protein 3 (YET3).